A 131-amino-acid chain; its full sequence is UPF0102 protein YraN (131 aa).

Residues 1–19 (MATVPTRSGSPRQLTTKQT) are compositionally biased toward polar residues. The segment at 1 to 21 (MATVPTRSGSPRQLTTKQTGD) is disordered.

Belongs to the UPF0102 family.

The polypeptide is UPF0102 protein YraN (Escherichia coli (strain K12 / MC4100 / BW2952)).